A 281-amino-acid chain; its full sequence is Ribosomal RNA small subunit methyltransferase A (281 aa).

S-adenosyl-L-methionine-binding residues include Asn-18, Leu-20, Gly-45, Glu-66, Asp-91, and Asn-118.

Belongs to the class I-like SAM-binding methyltransferase superfamily. rRNA adenine N(6)-methyltransferase family. RsmA subfamily.

The protein localises to the cytoplasm. It carries out the reaction adenosine(1518)/adenosine(1519) in 16S rRNA + 4 S-adenosyl-L-methionine = N(6)-dimethyladenosine(1518)/N(6)-dimethyladenosine(1519) in 16S rRNA + 4 S-adenosyl-L-homocysteine + 4 H(+). Specifically dimethylates two adjacent adenosines (A1518 and A1519) in the loop of a conserved hairpin near the 3'-end of 16S rRNA in the 30S particle. May play a critical role in biogenesis of 30S subunits. In Histophilus somni (strain 129Pt) (Haemophilus somnus), this protein is Ribosomal RNA small subunit methyltransferase A.